A 425-amino-acid polypeptide reads, in one-letter code: Tumor necrosis factor receptor superfamily member 16 (425 aa).

The N-terminal stretch at 1–29 is a signal peptide; it reads MRRAGAACSAMDRLRLLLLLILGVSSGGA. Over 30-253 the chain is Extracellular; that stretch reads KETCSTGLYT…VTRGTTDNLI (224 aa). TNFR-Cys repeat units follow at residues 32 to 65, 67 to 108, 109 to 147, and 149 to 189; these read TCST…QTVC, PCLD…DAVC, RCAY…NTVC, and ECPE…DAEC. Intrachain disulfides connect cysteine 33-cysteine 44, cysteine 45-cysteine 58, cysteine 48-cysteine 65, cysteine 68-cysteine 84, cysteine 87-cysteine 100, cysteine 90-cysteine 108, cysteine 110-cysteine 123, cysteine 126-cysteine 139, cysteine 129-cysteine 147, cysteine 150-cysteine 165, cysteine 168-cysteine 181, and cysteine 171-cysteine 189. 2 N-linked (GlcNAc...) asparagine glycosylation sites follow: asparagine 61 and asparagine 71. Positions 193 to 225 are disordered; the sequence is PGRWIPRSTPPEGSDSTAPSTQEPEVPPEQDLV. Polar residues predominate over residues 206–215; sequence SDSTAPSTQE. Residues 254–274 traverse the membrane as a helical segment; that stretch reads PVYCSILAAVVVGLVAYIAFK. The Cytoplasmic portion of the chain corresponds to 275–425; the sequence is RWNSCKQNKQ…CSESTATSPV (151 aa). 2 stretches are compositionally biased toward polar residues: residues 282–292 and 306–327; these read NKQGANSRPVN and SGIS…TASG. Residues 282–332 form a disordered region; sequence NKQGANSRPVNQTPPPEGEKLHSDSGISVDSQSLHDQQTHTQTASGQALKG. Position 312 is a phosphoserine (serine 312). The mediates interaction with KIDINS220 stretch occupies residues 327-342; that stretch reads GQALKGDGNLYSSLPL. One can recognise a Death domain in the interval 354-419; that stretch reads GDTWRHLAGE…DIVESLCSES (66 aa).

As to quaternary structure, homodimer; disulfide-linked. Heterodimer with SORCS2. The extracellular domains of the heterodimer bind NGF. The cytoplasmic region of the heterodimer binds TRIO. NGF binding mediates dissociation of TRIO from the receptor complex. Interacts with RTN4R. Interacts with TRAF2, TRAF4 and TRAF6. Interacts with PTPN13 and RANBP9. Interacts through TRAF6 with SQSTM1 which bridges NGFR to NTRK1. Interacts with BEX1. Interacts with BEX3. Interacts with KIDINS220 and NTRK1. Can form a ternary complex with NTRK1 and KIDINS220 and this complex is affected by the expression levels of KIDINS220. An increase in KIDINS220 expression leads to a decreased association of NGFR and NTRK1. Interacts (via death domain) with RAB31. Interacts with NTRK2; may regulate the ligand specificity of the NTRK2 receptor. Interacts with LINGO1. Interacts with NRADD. Interacts with MAGED1; the interaction antagonizes the association NGFR:NTRK1. Interacts (via death domain) with ARHGDIA and RIPK2. Interacts with BFAR. Post-translationally, subject to intramembrane proteolytic cleavage by the gamma-secretase complex, giving rise to an intracellular fragment that is rapidly degraded via the proteasome. In terms of processing, N- and O-glycosylated. Phosphorylated on serine residues.

It localises to the cell membrane. Its subcellular location is the cytoplasm. The protein resides in the perikaryon. It is found in the cell projection. The protein localises to the growth cone. It localises to the dendritic spine. Functionally, low affinity receptor which can bind to NGF, BDNF, NTF3, and NTF4. Forms a heterodimeric receptor with SORCS2 that binds the precursor forms of NGF, BDNF and NTF3 with high affinity, and has much lower affinity for mature NGF and BDNF. In response to proNGF binding, the heterodimeric receptor with SORCS2 activates a signaling cascade that leads to decreased Rac activity, reorganization of the actin cytoskeleton and neuronal growth cone collapse. Plays an important role in differentiation and survival of specific neuronal populations during development. Can mediate cell survival as well as cell death of neural cells. Plays a role in the inactivation of RHOA. Plays a role in the regulation of the translocation of GLUT4 to the cell surface in adipocytes and skeletal muscle cells in response to insulin, probably by regulating RAB31 activity, and thereby contributes to the regulation of insulin-dependent glucose uptake. Necessary for the circadian oscillation of the clock genes BMAL1, PER1, PER2 and NR1D1 in the suprachiasmatic nucleus (SCN) of the brain and in liver and of the genes involved in glucose and lipid metabolism in the liver. In Rattus norvegicus (Rat), this protein is Tumor necrosis factor receptor superfamily member 16 (Ngfr).